Here is a 74-residue protein sequence, read N- to C-terminus: VLIIAVLFLTACQLTTAETSSRGKQKHRALRSTDKDSRMTKRCTPAGDACDATTKCCIPFCNLATKKCQVPTFP.

The signal sequence occupies residues 1–17 (VLIIAVLFLTACQLTTA). Positions 18–40 (ETSSRGKQKHRALRSTDKDSRMT) are excised as a propeptide. Residues 19-40 (TSSRGKQKHRALRSTDKDSRMT) form a disordered region. Intrachain disulfides connect C43/C57, C50/C61, and C56/C68.

This sequence belongs to the conotoxin O1 superfamily. Expressed by the venom duct.

It localises to the secreted. The chain is Conotoxin AbVIH from Conus abbreviatus (Abbreviated cone).